The following is a 329-amino-acid chain: MTTSINSVVTVFQNVFTNHGSTLLNGILIATTVGGQSLVRKLTFSCPCAYPLNIYHSLVFMFGPTAALLLIGITVNSTTWKLAHGFFFRVRDTRHSWKTTCVSWIEVLIQSSVAPIAWLFVVFLDGGYYRCYRSHEFCLISDAILCKNSTILNSYASTSSFNKISDNGKYCPPCICVPNPTDASYLEAESQIYAWGLLLFSGVAAFLVITCNRMCDKYTLVQRQYVETYKNVETQKFDAVAKEHASQLAEHNARAFFGQKDWTKRDWDWVSGIPEVNNPLFARLRLIAAEKTQQTMYTPLQLWNDNKGYRIPQPDLQLTQIIVDETKED.

Over 1-14 (MTTSINSVVTVFQN) the chain is Cytoplasmic. A helical membrane pass occupies residues 15 to 35 (VFTNHGSTLLNGILIATTVGG). At 36–53 (QSLVRKLTFSCPCAYPLN) the chain is on the extracellular side. The chain crosses the membrane as a helical span at residues 54–74 (IYHSLVFMFGPTAALLLIGIT). The Cytoplasmic segment spans residues 75-103 (VNSTTWKLAHGFFFRVRDTRHSWKTTCVS). A helical membrane pass occupies residues 104–124 (WIEVLIQSSVAPIAWLFVVFL). At 125–191 (DGGYYRCYRS…DASYLEAESQ (67 aa)) the chain is on the extracellular side. Asn-148 is a glycosylation site (N-linked (GlcNAc...) asparagine). The helical transmembrane segment at 192 to 212 (IYAWGLLLFSGVAAFLVITCN) threads the bilayer. Residues 213 to 329 (RMCDKYTLVQ…QIIVDETKED (117 aa)) lie on the Cytoplasmic side of the membrane.

Belongs to the CALHM family. In terms of tissue distribution, expressed in head and body wall muscles, IL2, ASG, ASI, ASJ, PHA and PHB sensory neurons, and spermatheca.

It is found in the cell membrane. Its function is as follows. Pore-forming subunit of a voltage-gated ion channel. Permeable to monovalent cations, divalent cations and anions with selectivity Ca(2+) &gt; Mg(2+) &gt; Na(+) = K(+) &gt; Cl(-). Acts both as a voltage-gated and calcium-activated ion channel. Required for normal locomotion. The protein is Calcium homeostasis modulator protein of Caenorhabditis elegans.